Consider the following 333-residue polypeptide: Adenosine deaminase (333 aa).

Zn(2+) contacts are provided by histidine 12 and histidine 14. Substrate contacts are provided by histidine 14, aspartate 16, and glycine 170. Histidine 197 is a binding site for Zn(2+). Glutamate 200 acts as the Proton donor in catalysis. Residue aspartate 278 coordinates Zn(2+). Aspartate 279 contributes to the substrate binding site.

This sequence belongs to the metallo-dependent hydrolases superfamily. Adenosine and AMP deaminases family. Adenosine deaminase subfamily. It depends on Zn(2+) as a cofactor.

It carries out the reaction adenosine + H2O + H(+) = inosine + NH4(+). The catalysed reaction is 2'-deoxyadenosine + H2O + H(+) = 2'-deoxyinosine + NH4(+). Its function is as follows. Catalyzes the hydrolytic deamination of adenosine and 2-deoxyadenosine. The sequence is that of Adenosine deaminase from Escherichia coli O157:H7.